The chain runs to 251 residues: tRNA (guanine-N(1)-)-methyltransferase (251 aa).

S-adenosyl-L-methionine-binding positions include Gly122 and 142 to 147; that span reads IGDYVL. A disordered region spans residues 226–251; the sequence is RARRPDLFATRPQPNRQKPPKNTTDG. The span at 237–251 shows a compositional bias: polar residues; it reads PQPNRQKPPKNTTDG.

This sequence belongs to the RNA methyltransferase TrmD family. As to quaternary structure, homodimer.

The protein resides in the cytoplasm. The enzyme catalyses guanosine(37) in tRNA + S-adenosyl-L-methionine = N(1)-methylguanosine(37) in tRNA + S-adenosyl-L-homocysteine + H(+). Specifically methylates guanosine-37 in various tRNAs. This is tRNA (guanine-N(1)-)-methyltransferase from Rhodopseudomonas palustris (strain BisB18).